Here is a 1480-residue protein sequence, read N- to C-terminus: Cystic fibrosis transmembrane conductance regulator (1480 aa).

Residues 1 to 77 (MQRSPLEKAS…KLINALRRCF (77 aa)) are Cytoplasmic-facing. A helical transmembrane segment spans residues 78-98 (FWRFMFYGIFLYLGEVTKAVQ). Residues 81–365 (FMFYGIFLYL…WAVQTWYDSL (285 aa)) form the ABC transmembrane type-1 1 domain. At 99-122 (PLLLGRIIASYDPDNKEERSIAIY) the chain is on the extracellular side. A helical transmembrane segment spans residues 123–146 (LGIGLCLLFIVRTLLLHPAIFGLH). The Cytoplasmic portion of the chain corresponds to 147–195 (HIGMQMRIAMFSLIYKKTLKLSSRVLDKISIGQLVSLLSNNLNKFDEGL). The helical transmembrane segment at 196 to 216 (ALAHFVWIAPLQVALLMGLIW) threads the bilayer. The Extracellular segment spans residues 217-222 (ELLQAS). The helical transmembrane segment at 223–243 (AFCGLGFLIVLALFQAGLGRM) threads the bilayer. Residues 244–298 (MMKYRDQRAGKISERLVITSEMIENIQSVKAYCWEEAMEKMIENLRQTELKLTRK) are Cytoplasmic-facing. Residues 299 to 319 (AAYVRYFNSSAFFFSGFFVVF) form a helical membrane-spanning segment. Residues 320–339 (LSVLPYALIKGIILRKIFTT) are Extracellular-facing. Residues 340 to 358 (ISFCIVLRMAVTRQFPWAV) form a helical membrane-spanning segment. Topologically, residues 359–858 (QTWYDSLGAI…YLRYITVHKS (500 aa)) are cytoplasmic. ATP is bound by residues Trp-401, Ser-434, 458-465 (GSTGAGKT), and Gln-493. The region spanning 423–646 (NGDDSLFFSN…RPDFSSKLMG (224 aa)) is the ABC transporter 1 domain. Cys-524 carries S-palmitoyl cysteine lipidation. Phosphoserine occurs at positions 549 and 660. Residues 654–831 (SAERRNSILT…EEINEEDLKE (178 aa)) are disordered R region. Ser-670 is modified (phosphoserine; by PKA). At Ser-686 the chain carries Phosphoserine. Residue Lys-688 forms a Glycyl lysine isopeptide (Lys-Gly) (interchain with G-Cter in ubiquitin) linkage. Phosphoserine is present on residues Ser-700 and Ser-712. Thr-717 is modified (phosphothreonine). Ser-737, Ser-753, Ser-768, Ser-790, Ser-795, and Ser-813 each carry phosphoserine. Residues 859-879 (LIFVLIWCLVIFLAEVAASLV) form a helical membrane-spanning segment. Residues 859–1155 (LIFVLIWCLV…AVNSSIDVDS (297 aa)) form the ABC transmembrane type-1 2 domain. The Extracellular portion of the chain corresponds to 880–918 (VLWLLGNTPLQDKGNSTHSRNNSYAVIITSTSSYYVFYI). Residues Asn-894 and Asn-900 are each glycosylated (N-linked (GlcNAc...) asparagine). The chain crosses the membrane as a discontinuously helical span at residues 919 to 939 (YVGVADTLLAMGFFRGLPLVH). At 940–990 (TLITVSKILHHKMLHSVLQAPMSTLNTLKAGGILNRFSKDIAILDDLLPLT) the chain is on the cytoplasmic side. Residues 991-1011 (IFDFIQLLLIVIGAIAVVAVL) form a helical membrane-spanning segment. The Extracellular segment spans residues 1012-1013 (QP). The helical transmembrane segment at 1014-1034 (YIFVATVPVIVAFIMLRAYFL) threads the bilayer. The Cytoplasmic portion of the chain corresponds to 1035 to 1095 (QTSQQLKQLE…TANWFLYLST (61 aa)). A helical membrane pass occupies residues 1096 to 1116 (LRWFQMRIEMIFVIFFIAVTF). Over 1117–1130 (ISILTTGEGEGRVG) the chain is Extracellular. A helical membrane pass occupies residues 1131–1151 (IILTLAMNIMSTLQWAVNSSI). The Cytoplasmic portion of the chain corresponds to 1152 to 1480 (DVDSLMRSVS…TEEEVQDTRL (329 aa)). An ABC transporter 2 domain is found at 1210–1443 (MTVKDLTAKY…RSLFRQAISP (234 aa)). ATP-binding positions include Tyr-1219 and 1244-1251 (GRTGSGKS). Residues 1386-1480 (RTLKQAFADC…TEEEVQDTRL (95 aa)) form an interaction with GORASP2 region. Residue Cys-1395 is the site of S-palmitoyl cysteine attachment. 2 positions are modified to phosphoserine: Ser-1444 and Ser-1456. The segment at 1452–1480 (HRNSSKCKSKPQIAALKEETEEEVQDTRL) is disordered. A compositionally biased stretch (acidic residues) spans 1470-1480 (ETEEEVQDTRL). A PDZ-binding motif is present at residues 1478 to 1480 (TRL).

This sequence belongs to the ABC transporter superfamily. ABCC family. CFTR transporter (TC 3.A.1.202) subfamily. As to quaternary structure, monomer; does not require oligomerization for channel activity. May form oligomers in the membrane. Interacts with SLC26A3, SLC26A6 and NHERF1. Interacts with SHANK2. Interacts with MYO6. Interacts (via C-terminus) with GOPC (via PDZ domain); this promotes CFTR internalization and thereby decreases channel activity. Interacts with SLC4A7 through NHERF1. Found in a complex with MYO5B and RAB11A. Interacts with ANO1. Interacts with SLC26A8. Interacts with AHCYL1; the interaction increases CFTR activity. Interacts with CSE1L. The core-glycosylated form interacts with GORASP2 (via PDZ GRASP-type 1 domain) in respone to ER stress. Interacts with MARCHF2; the interaction leads to CFTR ubiqtuitination and degradation. Interacts with ADGRG2. Post-translationally, N-glycosylated. Phosphorylated; cAMP treatment promotes phosphorylation and activates the channel. Dephosphorylation decreases the ATPase activity (in vitro). Phosphorylation at PKA sites activates the channel. Phosphorylation at PKC sites enhances the response to phosphorylation by PKA. Phosphorylated by AMPK; this inhibits channel activity. In terms of processing, ubiquitinated, leading to its degradation in the lysosome. Deubiquitination by USP10 in early endosomes enhances its endocytic recycling to the cell membrane. Ubiquitinated by RNF185 during ER stress. Ubiquitinated by MARCHF2.

It is found in the apical cell membrane. It localises to the early endosome membrane. The protein resides in the cell membrane. Its subcellular location is the recycling endosome membrane. The protein localises to the endoplasmic reticulum membrane. It is found in the nucleus. It catalyses the reaction ATP + H2O + closed Cl(-) channel = ADP + phosphate + open Cl(-) channel.. It carries out the reaction chloride(in) = chloride(out). The catalysed reaction is hydrogencarbonate(in) = hydrogencarbonate(out). The enzyme catalyses ATP + H2O = ADP + phosphate + H(+). In terms of biological role, epithelial ion channel that plays an important role in the regulation of epithelial ion and water transport and fluid homeostasis. Mediates the transport of chloride ions across the cell membrane. Possesses an intrinsic ATPase activity and utilizes ATP to gate its channel; the passive flow of anions through the channel is gated by cycles of ATP binding and hydrolysis by the ATP-binding domains. The ion channel is also permeable to HCO(3)(-); selectivity depends on the extracellular chloride concentration. Exerts its function also by modulating the activity of other ion channels and transporters. Contributes to the regulation of the pH and the ion content of the epithelial fluid layer. Modulates the activity of the epithelial sodium channel (ENaC) complex, in part by regulating the cell surface expression of the ENaC complex. May regulate bicarbonate secretion and salvage in epithelial cells by regulating the transporter SLC4A7. Can inhibit the chloride channel activity of ANO1. Plays a role in the chloride and bicarbonate homeostasis during sperm epididymal maturation and capacitation. The polypeptide is Cystic fibrosis transmembrane conductance regulator (Pan troglodytes (Chimpanzee)).